A 379-amino-acid polypeptide reads, in one-letter code: Anomalous homeobox protein (379 aa).

A DNA-binding region (homeobox) is located at residues 135–196 (PEGLKSRNFP…NYRRRQRALP (62 aa)). Residues 195-283 (LPQHMKPAQQ…SKPLDVSGHP (89 aa)) are disordered. Over residues 237–246 (QWSEEREEKG) the composition is skewed to basic and acidic residues.

The protein resides in the nucleus. This chain is Anomalous homeobox protein (ANHX), found in Homo sapiens (Human).